Reading from the N-terminus, the 410-residue chain is Elongation factor Tu, chloroplastic (410 aa).

A tr-type G domain is found at 10–215; the sequence is KPHVNIGTIG…AVDQYIPTPK (206 aa). The G1 stretch occupies residues 19-26; sequence GHVDHGKT. 19–26 is a GTP binding site; sequence GHVDHGKT. T26 lines the Mg(2+) pocket. The interval 61–65 is G2; the sequence is GITIN. The tract at residues 82–85 is G3; that stretch reads DCPG. Residues 82–86 and 137–140 each bind GTP; these read DCPGH and NKQD. Residues 137–140 are G4; sequence NKQD. The tract at residues 175-177 is G5; it reads SAL.

It belongs to the TRAFAC class translation factor GTPase superfamily. Classic translation factor GTPase family. EF-Tu/EF-1A subfamily.

It is found in the plastid. The protein localises to the chloroplast. The catalysed reaction is GTP + H2O = GDP + phosphate + H(+). Functionally, GTP hydrolase that promotes the GTP-dependent binding of aminoacyl-tRNA to the A-site of ribosomes during protein biosynthesis. The polypeptide is Elongation factor Tu, chloroplastic (tufA) (Nephroselmis olivacea (Green alga)).